We begin with the raw amino-acid sequence, 283 residues long: Transmembrane protein 45B (283 aa).

The next 7 helical transmembrane spans lie at 7 to 27, 55 to 75, 99 to 119, 121 to 141, 153 to 173, 187 to 207, and 218 to 238; these read HALP…KCPF, LIEG…EQFV, MYLF…SHHV, VGLD…LFYF, IHSL…MEVF, LAIL…PLSG, and IMFI…IVGI. The interval 261–283 is disordered; the sequence is GLRKSTSTDSSSQKALLQESDEE. Residues 264–275 are compositionally biased toward polar residues; it reads KSTSTDSSSQKA.

The protein belongs to the TMEM45 family.

It localises to the membrane. In Danio rerio (Zebrafish), this protein is Transmembrane protein 45B (tmem45b).